We begin with the raw amino-acid sequence, 386 residues long: MEGVLAANWSAEAVNSSAAPPEAEGNRTAGPPQRNEALARVEVAVLCLILFLALSGNACVLLALRTTRHKHSRLFFFMKHLSIADLVVAVFQVLPQLLWDITFRFYGPDLLCRLVKYLQVVGMFASTYLLLLMSLDRCLAICQPLRALRRPADRLAVLATWLGCLVASAPQVHIFSLREVADGVFDCWAVFIQPWGPKAYITWITLAVYIVPVIVLAACYGLISFKIWQNLRLKTAAEAAEAIAGTEGAAAGSRGRAALARVSSVKLISKAKIRTVKMTFIIVLAFIVCWTPFFFVQMWSVWDADAPKEASAFIIAMLLASLNSCCNPWIYMLFTGHLFHELVQRFLCCSSSHLKTSRPGETSVSKKSNSSTFVLSQHSSSQKSCS.

The disordered stretch occupies residues 1-31 (MEGVLAANWSAEAVNSSAAPPEAEGNRTAGP). Topologically, residues 1 to 38 (MEGVLAANWSAEAVNSSAAPPEAEGNRTAGPPQRNEAL) are extracellular. 3 N-linked (GlcNAc...) asparagine glycosylation sites follow: asparagine 8, asparagine 15, and asparagine 26. Residues 39-63 (ARVEVAVLCLILFLALSGNACVLLA) traverse the membrane as a helical segment. Residues 64-74 (LRTTRHKHSRL) are Cytoplasmic-facing. A helical membrane pass occupies residues 75 to 97 (FFFMKHLSIADLVVAVFQVLPQL). The Extracellular portion of the chain corresponds to 98-113 (LWDITFRFYGPDLLCR). An intrachain disulfide couples cysteine 112 to cysteine 187. Residues 114–135 (LVKYLQVVGMFASTYLLLLMSL) traverse the membrane as a helical segment. At 136–154 (DRCLAICQPLRALRRPADR) the chain is on the cytoplasmic side. Residues 155–175 (LAVLATWLGCLVASAPQVHIF) form a helical membrane-spanning segment. At 176-202 (SLREVADGVFDCWAVFIQPWGPKAYIT) the chain is on the extracellular side. The helical transmembrane segment at 203 to 225 (WITLAVYIVPVIVLAACYGLISF) threads the bilayer. Residues 226 to 277 (KIWQNLRLKTAAEAAEAIAGTEGAAAGSRGRAALARVSSVKLISKAKIRTVK) lie on the Cytoplasmic side of the membrane. Residues 278–296 (MTFIIVLAFIVCWTPFFFV) traverse the membrane as a helical segment. Residues 297–311 (QMWSVWDADAPKEAS) are Extracellular-facing. The helical transmembrane segment at 312-334 (AFIIAMLLASLNSCCNPWIYMLF) threads the bilayer. Over 335-386 (TGHLFHELVQRFLCCSSSHLKTSRPGETSVSKKSNSSTFVLSQHSSSQKSCS) the chain is Cytoplasmic. Polar residues predominate over residues 355 to 375 (KTSRPGETSVSKKSNSSTFVL). The disordered stretch occupies residues 355 to 386 (KTSRPGETSVSKKSNSSTFVLSQHSSSQKSCS). Phosphoserine is present on residues serine 368 and serine 370. Low complexity predominate over residues 376 to 386 (SQHSSSQKSCS).

The protein belongs to the G-protein coupled receptor 1 family. Vasopressin/oxytocin receptor subfamily.

Its subcellular location is the cell membrane. Receptor for oxytocin. The activity of this receptor is mediated by G proteins which activate a phosphatidylinositol-calcium second messenger system. The sequence is that of Oxytocin receptor (OXTR) from Sus scrofa (Pig).